We begin with the raw amino-acid sequence, 439 residues long: Protein disulfide-isomerase A6 (439 aa).

The N-terminal stretch at 1–19 (MARLGFGLVSCTFFLAASG) is a signal peptide. Thioredoxin domains follow at residues 20 to 133 (LYSS…ALRQ) and 151 to 287 (QGRG…EDVA). Residues C55 and C58 each act as nucleophile in the active site. C55 and C58 are oxidised to a cystine. Phosphoserine occurs at positions 129, 156, and 158. The segment at 141–160 (GRSGGYSSGKQGRGDSSSKK) is disordered. Catalysis depends on nucleophile residues C190 and C193. C190 and C193 are joined by a disulfide. The disordered stretch occupies residues 400–425 (GSFPAITAREPWDGRDGELPVEDDID). S427 bears the Phosphoserine mark. The short motif at 436-439 (KDEL) is the Prevents secretion from ER element.

The protein belongs to the protein disulfide isomerase family. In terms of assembly, part of a large chaperone multiprotein complex comprising DNAJB11, HSP90B1, HSPA5, HYOU, PDIA2, PDIA4, PDIA6, PPIB, SDF2L1, UGGT1 and very small amounts of ERP29, but not, or at very low levels, CALR nor CANX. Interacts with MICA on the surface of tumor cells, leading to MICA disulfide bond reduction which is required for its release from tumor cells. Interacts with ITGB3 following platelet stimulation. Interacts with ERN1; the interaction is direct. Interacts with EIF2AK3. In terms of tissue distribution, expressed most abundantly in lung and kidney, followed by heart, liver and brain.

Its subcellular location is the endoplasmic reticulum lumen. It is found in the cell membrane. The protein localises to the melanosome. It catalyses the reaction Catalyzes the rearrangement of -S-S- bonds in proteins.. May function as a chaperone that inhibits aggregation of misfolded proteins. Negatively regulates the unfolded protein response (UPR) through binding to UPR sensors such as ERN1, which in turn inactivates ERN1 signaling. May also regulate the UPR via the EIF2AK3 UPR sensor. Plays a role in platelet aggregation and activation by agonists such as convulxin, collagen and thrombin. This is Protein disulfide-isomerase A6 (PDIA6) from Mesocricetus auratus (Golden hamster).